Reading from the N-terminus, the 285-residue chain is uncharacterized protein (285 aa).

An HTH araC/xylS-type domain is found at 184–282 (HSICNWVQDN…GLTPGEYSAR (99 aa)). 2 DNA-binding regions (H-T-H motif) span residues 201–222 (ESVAQFFNITPNHLSKLFAQHG) and 249–272 (IHEVAQRCGFPDSDYFCRVFRRQF).

This is an uncharacterized protein from Escherichia coli (strain K12).